Consider the following 101-residue polypeptide: Putative antitoxin HigA2 (101 aa).

The region spanning 35 to 90 (LRELRAAQSLTQVQVAALAHIRQSRVSSIENGDIGSAQVNTLRKYVSALGGELDIT) is the HTH cro/C1-type domain. Residues 46 to 65 (QVQVAALAHIRQSRVSSIEN) constitute a DNA-binding region (H-T-H motif).

Its function is as follows. Putative antitoxin component of a type II toxin-antitoxin (TA) system. Its cognate toxin would be HigB2. This chain is Putative antitoxin HigA2, found in Mycobacterium tuberculosis (strain ATCC 25618 / H37Rv).